Here is a 391-residue protein sequence, read N- to C-terminus: MSLNPRDAVIVDFGRTPMGRSKGGMHRNTRAETMSAHLISKVLERNAKIDPAEVEDVIWGCVNQTLEQGWNIARMASLMTQIPHTSAGQTVSRLCGSSMSALHTAVQAIQTGNGDVFVVGGVEHMGHVGMMHGVDPNPHLSLYAAKASGMMGLTAEMLGKMHGISREAQDAFGERSHRLAHKATVEGKFKDEIIPMQGYDENGFLKVFDYDETIRPETTLESLATLKPAFNPKGGTVTAGTSSQITDGASCMIVMSAQRAQDLGIQPMAVVRAMAVAGVDPAIMGYGPVPSTQKALKRAGLTMADIDFVELNEAFAAQALPVLKDLKLLDKMEEKVNLHGGAIALGHPFGCSGARISGTLLNVMKQNGGTLGVSTMCVGLGQGITTVFERV.

C95 acts as the Acyl-thioester intermediate in catalysis. Residues H347 and C377 each act as proton acceptor in the active site.

It belongs to the thiolase-like superfamily. Thiolase family. In terms of assembly, heterotetramer of two alpha chains (FadB) and two beta chains (FadA).

It localises to the cytoplasm. The catalysed reaction is an acyl-CoA + acetyl-CoA = a 3-oxoacyl-CoA + CoA. It participates in lipid metabolism; fatty acid beta-oxidation. In terms of biological role, catalyzes the final step of fatty acid oxidation in which acetyl-CoA is released and the CoA ester of a fatty acid two carbons shorter is formed. The sequence is that of 3-ketoacyl-CoA thiolase from Ectopseudomonas mendocina (strain ymp) (Pseudomonas mendocina).